The primary structure comprises 446 residues: Histidine--tRNA ligase (446 aa).

The protein belongs to the class-II aminoacyl-tRNA synthetase family. In terms of assembly, homodimer.

It localises to the cytoplasm. The enzyme catalyses tRNA(His) + L-histidine + ATP = L-histidyl-tRNA(His) + AMP + diphosphate + H(+). The protein is Histidine--tRNA ligase of Burkholderia vietnamiensis (strain G4 / LMG 22486) (Burkholderia cepacia (strain R1808)).